The sequence spans 746 residues: Stromal interaction molecule 2 (746 aa).

Residues 1–14 (MLVLGLLVAGAADG) form the signal peptide. Residues 15 to 218 (CELVPRHLRG…RPPHNWMKDF (204 aa)) lie on the Extracellular side of the membrane. The region spanning 67 to 102 (FSLEALQTIHKQMDDDKDGGIEVEESDEFIREDMKY) is the EF-hand domain. Ca(2+) is bound by residues aspartate 80, aspartate 82, aspartate 84, and glutamate 91. N-linked (GlcNAc...) asparagine glycosylation is present at asparagine 135. One can recognise an SAM domain in the interval 136-204 (WTLEDTLQWL…QLKALDVVLF (69 aa)). The helical transmembrane segment at 219–235 (ILTVSIVIGVGGCWFAY) threads the bilayer. Residues 236 to 746 (TQNKTSKEHV…IKSLFKKKSK (511 aa)) lie on the Cytoplasmic side of the membrane. Residues 247–394 (KMMKDLESLQ…EKIKKKRSTV (148 aa)) adopt a coiled-coil conformation. The disordered stretch occupies residues 483–562 (DLDEDTPPIV…SLPSPDPDIL (80 aa)). A Phosphoserine modification is found at serine 523. Positions 537–549 (HPSHPRHPHHPQH) are enriched in basic residues. A phosphoserine mark is found at serine 609, serine 621, serine 640, serine 650, serine 661, serine 665, serine 680, and serine 697. A disordered region spans residues 685 to 746 (SSGIPVPKPR…IKSLFKKKSK (62 aa)). Positions 723-732 (DLCHNGEKSK) are enriched in basic and acidic residues. Basic residues predominate over residues 733 to 746 (KPSKIKSLFKKKSK).

In terms of assembly, oligomer with STIM1. Interacts with ORAI1. Post-translationally, glycosylated. Phosphorylated predominantly on Ser residues. As to expression, expressed in all tissues and tumor cell lines examined.

The protein localises to the endoplasmic reticulum membrane. Plays a role in mediating store-operated Ca(2+) entry (SOCE), a Ca(2+) influx following depletion of intracellular Ca(2+) stores. Functions as a highly sensitive Ca(2+) sensor in the endoplasmic reticulum which activates both store-operated and store-independent Ca(2+)-influx. Regulates basal cytosolic and endoplasmic reticulum Ca(2+) concentrations. Upon mild variations of the endoplasmic reticulum Ca(2+) concentration, translocates from the endoplasmic reticulum to the plasma membrane where it probably activates the Ca(2+) release-activated Ca(2+) (CRAC) channels ORAI1, ORAI2 and ORAI3. May inhibit STIM1-mediated Ca(2+) influx. The protein is Stromal interaction molecule 2 (STIM2) of Homo sapiens (Human).